The chain runs to 160 residues: Prorelaxin (160 aa).

Intrachain disulfides connect Cys10–Cys147, Cys22–Cys160, and Cys146–Cys151. Positions 34–133 are cleaved as a propeptide — connecting peptide; the sequence is QEKQRILGSG…KDFNLNIYSP (100 aa).

Belongs to the insulin family. As to quaternary structure, heterodimer of a B chain and an A chain linked by two disulfide bonds. As to expression, expressed in the endometrium during pregnancy and in mammary gland during lactation.

The protein localises to the secreted. Its function is as follows. Relaxin is an ovarian hormone that acts with estrogen to produce dilatation of the birth canal in many mammals. It bears mature young, and allows separation of the pelvic bones. The protein is Prorelaxin (RLN) of Cavia porcellus (Guinea pig).